The chain runs to 144 residues: Large ribosomal subunit protein uL15 (144 aa).

The disordered stretch occupies residues 1 to 56 (MELNNLKPAAGAKHAKRRVGRGIGSGLGKTAGRGHKGQKSRSGGFHKVGFEGGQMP). A compositionally biased stretch (gly residues) spans 21–31 (RGIGSGLGKTA).

The protein belongs to the universal ribosomal protein uL15 family. As to quaternary structure, part of the 50S ribosomal subunit.

Functionally, binds to the 23S rRNA. This chain is Large ribosomal subunit protein uL15, found in Burkholderia ambifaria (strain MC40-6).